We begin with the raw amino-acid sequence, 185 residues long: GTP cyclohydrolase 1 (185 aa).

Cysteine 75, histidine 78, and cysteine 146 together coordinate Zn(2+).

This sequence belongs to the GTP cyclohydrolase I family. In terms of assembly, toroid-shaped homodecamer, composed of two pentamers of five dimers.

The catalysed reaction is GTP + H2O = 7,8-dihydroneopterin 3'-triphosphate + formate + H(+). It functions in the pathway cofactor biosynthesis; 7,8-dihydroneopterin triphosphate biosynthesis; 7,8-dihydroneopterin triphosphate from GTP: step 1/1. The protein is GTP cyclohydrolase 1 of Methylococcus capsulatus (strain ATCC 33009 / NCIMB 11132 / Bath).